The primary structure comprises 442 residues: Protein translocase subunit SecY (442 aa).

10 helical membrane passes run 24-44 (FLFLAIIVYRIGAHIPVPGIN), 76-96 (IFALGIMPYISASIIMQLMTA), 125-145 (VLALVQAIGMSVGLGSQGVAF), 149-169 (FGFYFVAVTTFVAGAMFMMWL), 178-198 (VGNGISMLIFAGIVAGLPRAI), 212-232 (IFALIGVGLLAVAIIAFVVFI), 269-289 (VIPAIFASSILLFPASLGSWF), 312-332 (NILLFTAGIVFFCFFYTALMF), 363-383 (GVLTRLTMFGALYMTAVCLLP), and 385-405 (FLVVAAHVPFYLGGTSLLIVV).

The protein belongs to the SecY/SEC61-alpha family. Component of the Sec protein translocase complex. Heterotrimer consisting of SecY, SecE and SecG subunits. The heterotrimers can form oligomers, although 1 heterotrimer is thought to be able to translocate proteins. Interacts with the ribosome. Interacts with SecDF, and other proteins may be involved. Interacts with SecA.

It localises to the cell inner membrane. Its function is as follows. The central subunit of the protein translocation channel SecYEG. Consists of two halves formed by TMs 1-5 and 6-10. These two domains form a lateral gate at the front which open onto the bilayer between TMs 2 and 7, and are clamped together by SecE at the back. The channel is closed by both a pore ring composed of hydrophobic SecY resides and a short helix (helix 2A) on the extracellular side of the membrane which forms a plug. The plug probably moves laterally to allow the channel to open. The ring and the pore may move independently. In Pseudomonas aeruginosa (strain ATCC 15692 / DSM 22644 / CIP 104116 / JCM 14847 / LMG 12228 / 1C / PRS 101 / PAO1), this protein is Protein translocase subunit SecY.